Here is a 646-residue protein sequence, read N- to C-terminus: Hypoxia up-regulated protein 1 (646 aa).

Residues 1–22 (MRPLVCVLWMFLFALLSSHTES) form the signal peptide. The interval 572 to 646 (LFGGGSSVSE…KEEEKAEPQE (75 aa)) is disordered. Over residues 590–610 (VQEEDEVPTEPTKEEEQESAD) the composition is skewed to acidic residues. Residues 611–646 (PADKQQDKENNKEKGTSATNEKEEGKKEEEKAEPQE) are compositionally biased toward basic and acidic residues.

Belongs to the heat shock protein 70 family.

The protein resides in the endoplasmic reticulum lumen. Functionally, has a pivotal role in cytoprotective cellular mechanisms triggered by oxygen deprivation. May play a role as a molecular chaperone and participate in protein folding. In Xenopus laevis (African clawed frog), this protein is Hypoxia up-regulated protein 1 (hyou1).